The chain runs to 205 residues: Protein-L-isoaspartate O-methyltransferase (205 aa).

Ser56 is a catalytic residue.

The protein belongs to the methyltransferase superfamily. L-isoaspartyl/D-aspartyl protein methyltransferase family.

It is found in the cytoplasm. The catalysed reaction is [protein]-L-isoaspartate + S-adenosyl-L-methionine = [protein]-L-isoaspartate alpha-methyl ester + S-adenosyl-L-homocysteine. Its function is as follows. Catalyzes the methyl esterification of L-isoaspartyl residues in peptides and proteins that result from spontaneous decomposition of normal L-aspartyl and L-asparaginyl residues. It plays a role in the repair and/or degradation of damaged proteins. In Pyrobaculum arsenaticum (strain DSM 13514 / JCM 11321 / PZ6), this protein is Protein-L-isoaspartate O-methyltransferase.